The sequence spans 104 residues: Large ribosomal subunit protein uL24 (104 aa).

Belongs to the universal ribosomal protein uL24 family. In terms of assembly, part of the 50S ribosomal subunit.

Functionally, one of two assembly initiator proteins, it binds directly to the 5'-end of the 23S rRNA, where it nucleates assembly of the 50S subunit. In terms of biological role, one of the proteins that surrounds the polypeptide exit tunnel on the outside of the subunit. The chain is Large ribosomal subunit protein uL24 from Chromobacterium violaceum (strain ATCC 12472 / DSM 30191 / JCM 1249 / CCUG 213 / NBRC 12614 / NCIMB 9131 / NCTC 9757 / MK).